A 335-amino-acid polypeptide reads, in one-letter code: Phosphate acyltransferase (335 aa).

Belongs to the PlsX family. As to quaternary structure, homodimer. Probably interacts with PlsY.

The protein localises to the cytoplasm. The catalysed reaction is a fatty acyl-[ACP] + phosphate = an acyl phosphate + holo-[ACP]. It functions in the pathway lipid metabolism; phospholipid metabolism. In terms of biological role, catalyzes the reversible formation of acyl-phosphate (acyl-PO(4)) from acyl-[acyl-carrier-protein] (acyl-ACP). This enzyme utilizes acyl-ACP as fatty acyl donor, but not acyl-CoA. The chain is Phosphate acyltransferase from Clostridium botulinum (strain Langeland / NCTC 10281 / Type F).